The chain runs to 271 residues: Energy-coupling factor transporter ATP-binding protein EcfA (271 aa).

Residues 2–231 form the ABC transporter domain; sequence ISIQNLTFYY…PLFLQQYKLN (230 aa). 34–41 serves as a coordination point for ATP; it reads GHNGSGKS.

Belongs to the ABC transporter superfamily. Energy-coupling factor EcfA family. As to quaternary structure, forms a stable energy-coupling factor (ECF) transporter complex composed of 2 membrane-embedded substrate-binding proteins (S component), 2 ATP-binding proteins (A component) and 2 transmembrane proteins (T component).

Its subcellular location is the cell membrane. ATP-binding (A) component of a common energy-coupling factor (ECF) ABC-transporter complex. Unlike classic ABC transporters this ECF transporter provides the energy necessary to transport a number of different substrates. This is Energy-coupling factor transporter ATP-binding protein EcfA from Onion yellows phytoplasma (strain OY-M).